Here is a 377-residue protein sequence, read N- to C-terminus: Ferric enterobactin transport protein FepE (377 aa).

The Cytoplasmic portion of the chain corresponds to 1 to 41 (MSSLNIKQGSDAHFPDYPLASPSNNEIDLLNLISVLWRAKK). Residues 42–62 (TVMAVVFAFACAGLLISFILP) form a helical membrane-spanning segment. Over 63 to 338 (QKWTSAAVVT…LPVKKDGPGK (276 aa)) the chain is Periplasmic. A helical transmembrane segment spans residues 339–359 (AIIVILSALIGGMVACGGVLL). At 360-377 (RYAMASRKQDAMMADHLV) the chain is on the cytoplasmic side.

This sequence belongs to the WzzB/Cld/Rol family.

The protein resides in the cell inner membrane. Part of the ferric enterobactin transport system. The polypeptide is Ferric enterobactin transport protein FepE (fepE) (Escherichia coli (strain K12)).